Consider the following 426-residue polypeptide: Serine--tRNA ligase (426 aa).

231–233 is a binding site for L-serine; the sequence is TAE. ATP is bound by residues 262 to 264 and valine 278; that span reads RRE. Glutamate 285 serves as a coordination point for L-serine. An ATP-binding site is contributed by 349 to 352; sequence EVSS. Serine 384 is an L-serine binding site.

Belongs to the class-II aminoacyl-tRNA synthetase family. Type-1 seryl-tRNA synthetase subfamily. As to quaternary structure, homodimer. The tRNA molecule binds across the dimer.

It is found in the cytoplasm. It carries out the reaction tRNA(Ser) + L-serine + ATP = L-seryl-tRNA(Ser) + AMP + diphosphate + H(+). It catalyses the reaction tRNA(Sec) + L-serine + ATP = L-seryl-tRNA(Sec) + AMP + diphosphate + H(+). The protein operates within aminoacyl-tRNA biosynthesis; selenocysteinyl-tRNA(Sec) biosynthesis; L-seryl-tRNA(Sec) from L-serine and tRNA(Sec): step 1/1. Functionally, catalyzes the attachment of serine to tRNA(Ser). Is also able to aminoacylate tRNA(Sec) with serine, to form the misacylated tRNA L-seryl-tRNA(Sec), which will be further converted into selenocysteinyl-tRNA(Sec). This is Serine--tRNA ligase from Chlamydia felis (strain Fe/C-56) (Chlamydophila felis).